The following is a 104-amino-acid chain: Small ribosomal subunit protein uS10 (104 aa).

This sequence belongs to the universal ribosomal protein uS10 family. Part of the 30S ribosomal subunit.

In terms of biological role, involved in the binding of tRNA to the ribosomes. The sequence is that of Small ribosomal subunit protein uS10 from Aliarcobacter butzleri (strain RM4018) (Arcobacter butzleri).